An 849-amino-acid chain; its full sequence is Protein translocase subunit SecA (849 aa).

ATP contacts are provided by residues Gln85, 103 to 107 (GEGKT), and Asp493. Zn(2+)-binding residues include Cys832, Cys834, Cys843, and His844.

This sequence belongs to the SecA family. Monomer and homodimer. Part of the essential Sec protein translocation apparatus which comprises SecA, SecYEG and auxiliary proteins SecDF. Other proteins may also be involved. Requires Zn(2+) as cofactor.

It is found in the cell membrane. Its subcellular location is the cytoplasm. It carries out the reaction ATP + H2O + cellular proteinSide 1 = ADP + phosphate + cellular proteinSide 2.. Functionally, part of the Sec protein translocase complex. Interacts with the SecYEG preprotein conducting channel. Has a central role in coupling the hydrolysis of ATP to the transfer of proteins into and across the cell membrane, serving as an ATP-driven molecular motor driving the stepwise translocation of polypeptide chains across the membrane. In Streptococcus thermophilus (strain ATCC BAA-491 / LMD-9), this protein is Protein translocase subunit SecA.